The following is a 545-amino-acid chain: Adenine deaminase (545 aa).

It belongs to the metallo-dependent hydrolases superfamily. Adenine deaminase family. Requires Mn(2+) as cofactor.

The enzyme catalyses adenine + H2O + H(+) = hypoxanthine + NH4(+). The chain is Adenine deaminase from Salinibacter ruber (strain DSM 13855 / M31).